We begin with the raw amino-acid sequence, 451 residues long: Probable plasmid replicative DNA helicase (451 aa).

One can recognise an SF4 helicase domain in the interval 194 to 451; sequence QNSFFDAFPT…SKFSAIKKVW (258 aa). 225–232 serves as a coordination point for ATP; sequence ARPSIGKT.

The protein belongs to the helicase family. DnaB subfamily. As to quaternary structure, homohexamer.

The catalysed reaction is Couples ATP hydrolysis with the unwinding of duplex DNA at the replication fork by translocating in the 5'-3' direction. This creates two antiparallel DNA single strands (ssDNA). The leading ssDNA polymer is the template for DNA polymerase III holoenzyme which synthesizes a continuous strand.. It catalyses the reaction ATP + H2O = ADP + phosphate + H(+). In terms of biological role, a replicative DNA helicase, it participates in initiation and elongation during DNA replication. Travels ahead of the DNA replisome, separating dsDNA into templates for DNA synthesis. A processive ATP-dependent 5'-3' DNA helicase it has DNA-dependent ATPase activity. Its function is as follows. The plasmid this protein is encoded on is thought to be required for growth within mammalian cells. This chain is Probable plasmid replicative DNA helicase, found in Chlamydia trachomatis serovar L2 (strain ATCC VR-902B / DSM 19102 / 434/Bu).